A 98-amino-acid polypeptide reads, in one-letter code: NADH-ubiquinone oxidoreductase chain 4L (98 aa).

The next 3 membrane-spanning stretches (helical) occupy residues 1–21 (MSLV…GLLM), 29–49 (SLLC…LTIL), and 61–81 (IILL…LVMV).

It belongs to the complex I subunit 4L family. Core subunit of respiratory chain NADH dehydrogenase (Complex I) which is composed of 45 different subunits.

It is found in the mitochondrion inner membrane. The enzyme catalyses a ubiquinone + NADH + 5 H(+)(in) = a ubiquinol + NAD(+) + 4 H(+)(out). Core subunit of the mitochondrial membrane respiratory chain NADH dehydrogenase (Complex I) which catalyzes electron transfer from NADH through the respiratory chain, using ubiquinone as an electron acceptor. Part of the enzyme membrane arm which is embedded in the lipid bilayer and involved in proton translocation. The chain is NADH-ubiquinone oxidoreductase chain 4L (MT-ND4L) from Rangifer tarandus (Reindeer).